We begin with the raw amino-acid sequence, 78 residues long: Beta-defensin 105A (78 aa).

A signal peptide spans 1 to 27 (MALIRKTFYFLFAVFFILVQLPSGCQA). Intrachain disulfides connect cysteine 43–cysteine 74, cysteine 53–cysteine 67, and cysteine 57–cysteine 73.

It belongs to the beta-defensin family.

The protein resides in the secreted. Has antimicrobial activity. The chain is Beta-defensin 105A (DEFB105A) from Gorilla gorilla gorilla (Western lowland gorilla).